We begin with the raw amino-acid sequence, 393 residues long: NAD(P)H-quinone oxidoreductase subunit H, chloroplastic (393 aa).

It belongs to the complex I 49 kDa subunit family. As to quaternary structure, NDH is composed of at least 16 different subunits, 5 of which are encoded in the nucleus.

The protein resides in the plastid. Its subcellular location is the chloroplast thylakoid membrane. The catalysed reaction is a plastoquinone + NADH + (n+1) H(+)(in) = a plastoquinol + NAD(+) + n H(+)(out). It catalyses the reaction a plastoquinone + NADPH + (n+1) H(+)(in) = a plastoquinol + NADP(+) + n H(+)(out). NDH shuttles electrons from NAD(P)H:plastoquinone, via FMN and iron-sulfur (Fe-S) centers, to quinones in the photosynthetic chain and possibly in a chloroplast respiratory chain. The immediate electron acceptor for the enzyme in this species is believed to be plastoquinone. Couples the redox reaction to proton translocation, and thus conserves the redox energy in a proton gradient. This Sorghum bicolor (Sorghum) protein is NAD(P)H-quinone oxidoreductase subunit H, chloroplastic.